The following is a 450-amino-acid chain: Probable helicase D10 (450 aa).

A Helicase ATP-binding domain is found at 95–240; sequence PIYEECDDTC…MFKDFFGYKI (146 aa). 108-115 serves as a coordination point for ATP; sequence GKPGFGKT. A DEAH box motif is present at residues 193–196; sequence DEVH. Positions 289 to 439 constitute a Helicase C-terminal domain; sequence NLAHLYVNMG…TITMTPEKAV (151 aa).

It catalyses the reaction ATP + H2O = ADP + phosphate + H(+). The protein is Probable helicase D10 (D10) of Escherichia phage T5 (Enterobacteria phage T5).